A 507-amino-acid chain; its full sequence is Maturase K (507 aa).

Belongs to the intron maturase 2 family. MatK subfamily.

It is found in the plastid. It localises to the chloroplast. Functionally, usually encoded in the trnK tRNA gene intron. Probably assists in splicing its own and other chloroplast group II introns. This Nymphaea alba (White water-lily) protein is Maturase K.